We begin with the raw amino-acid sequence, 224 residues long: Thiamine-phosphate synthase (224 aa).

4-amino-2-methyl-5-(diphosphooxymethyl)pyrimidine is bound by residues 41 to 45 (QFRDK) and D77. Residues D78 and D97 each contribute to the Mg(2+) site. S116 contributes to the 4-amino-2-methyl-5-(diphosphooxymethyl)pyrimidine binding site. 143 to 145 (TNS) is a binding site for 2-[(2R,5Z)-2-carboxy-4-methylthiazol-5(2H)-ylidene]ethyl phosphate. 4-amino-2-methyl-5-(diphosphooxymethyl)pyrimidine is bound at residue K146. 2-[(2R,5Z)-2-carboxy-4-methylthiazol-5(2H)-ylidene]ethyl phosphate-binding positions include G174 and 194–195 (IS).

It belongs to the thiamine-phosphate synthase family. The cofactor is Mg(2+).

It catalyses the reaction 2-[(2R,5Z)-2-carboxy-4-methylthiazol-5(2H)-ylidene]ethyl phosphate + 4-amino-2-methyl-5-(diphosphooxymethyl)pyrimidine + 2 H(+) = thiamine phosphate + CO2 + diphosphate. The enzyme catalyses 2-(2-carboxy-4-methylthiazol-5-yl)ethyl phosphate + 4-amino-2-methyl-5-(diphosphooxymethyl)pyrimidine + 2 H(+) = thiamine phosphate + CO2 + diphosphate. It carries out the reaction 4-methyl-5-(2-phosphooxyethyl)-thiazole + 4-amino-2-methyl-5-(diphosphooxymethyl)pyrimidine + H(+) = thiamine phosphate + diphosphate. Its pathway is cofactor biosynthesis; thiamine diphosphate biosynthesis; thiamine phosphate from 4-amino-2-methyl-5-diphosphomethylpyrimidine and 4-methyl-5-(2-phosphoethyl)-thiazole: step 1/1. Functionally, condenses 4-methyl-5-(beta-hydroxyethyl)thiazole monophosphate (THZ-P) and 2-methyl-4-amino-5-hydroxymethyl pyrimidine pyrophosphate (HMP-PP) to form thiamine monophosphate (TMP). This chain is Thiamine-phosphate synthase, found in Latilactobacillus sakei subsp. sakei (strain 23K) (Lactobacillus sakei subsp. sakei).